Reading from the N-terminus, the 406-residue chain is Tryptophan synthase beta chain (406 aa).

Lys99 is modified (N6-(pyridoxal phosphate)lysine).

The protein belongs to the TrpB family. As to quaternary structure, tetramer of two alpha and two beta chains. Pyridoxal 5'-phosphate serves as cofactor.

The enzyme catalyses (1S,2R)-1-C-(indol-3-yl)glycerol 3-phosphate + L-serine = D-glyceraldehyde 3-phosphate + L-tryptophan + H2O. Its pathway is amino-acid biosynthesis; L-tryptophan biosynthesis; L-tryptophan from chorismate: step 5/5. Functionally, the beta subunit is responsible for the synthesis of L-tryptophan from indole and L-serine. In Methylobacterium nodulans (strain LMG 21967 / CNCM I-2342 / ORS 2060), this protein is Tryptophan synthase beta chain.